A 2153-amino-acid polypeptide reads, in one-letter code: Genome polyprotein (2153 aa).

Gly2 carries N-myristoyl glycine; by host lipidation. A disordered region spans residues 213 to 240 (HTHPGQSGHQIRGPSQSNDRSGGKPDED). A compositionally biased stretch (polar residues) spans 216-232 (PGQSGHQIRGPSQSNDR). The tract at residues 565 to 584 (ELQNNDDPVENFVESTLKEV) is amphipathic alpha-helix. Active-site for protease 2A activity residues include His864 and Asp880. Cys897 and Cys899 together coordinate Zn(2+). Cys951 functions as the For protease 2A activity in the catalytic mechanism. Residues Cys957 and His959 each contribute to the Zn(2+) site. Positions 1088–1158 (SDSWLRKFTE…GFSSASSEAQ (71 aa)) are membrane-binding. Residues 1088–1224 (SDSWLRKFTE…NPGCGKSLVT (137 aa)) form an oligomerization region. The RNA-binding stretch occupies residues 1109-1113 (SIKIG). One can recognise an SF3 helicase domain in the interval 1187-1346 (TKIQKDLKQL…FRNTTGLLDV (160 aa)). 1214–1221 (GNPGCGKS) contributes to the ATP binding site. The Zn(2+) site is built by Cys1353, Cys1365, and Cys1370. The C4-type; degenerate zinc finger occupies 1353–1370 (CTGCPKPAHYKTCCPLLC). Positions 1397-1404 (ENATRKKV) are RNA-binding. The oligomerization stretch occupies residues 1408–1413 (LDAIFQ). The stretch at 1460-1480 (VHYMLNCLGSLIIILGTVYAL) is an intramembrane region. The residue at position 1491 (Tyr1491) is an O-(5'-phospho-RNA)-tyrosine. The Peptidase C3 domain maps to 1511-1689 (GPEHEFVRAL…YGAALLRKYF (179 aa)). Catalysis depends on for protease 3C activity residues His1550, Glu1581, and Cys1657. The 114-residue stretch at 1920-2033 (GELLAFDYTN…SYPFELDPME (114 aa)) folds into the RdRp catalytic domain. Mg(2+) is bound by residues Asp1926 and Asp2019.

This sequence belongs to the picornaviruses polyprotein family. As to quaternary structure, interacts with capsid protein VP1 and capsid protein VP3 to form heterotrimeric protomers. Interacts with capsid protein VP0, and capsid protein VP3 to form heterotrimeric protomers. Five protomers subsequently associate to form pentamers which serve as building blocks for the capsid. Interacts with capsid protein VP2, capsid protein VP3 and capsid protein VP4 following cleavage of capsid protein VP0. Interacts (via C-terminus) with capsid protein VP4 (via C-terminus). Interacts with host CDHR3 (via N-terminus); this interaction occurs near each threefold vertex of the capsid and allows the virus attachment and entry into the host cell. In terms of assembly, interacts with capsid protein VP1 and capsid protein VP3 in the mature capsid. Interacts with host CDHR3 (via N-terminus); this interaction occurs near each threefold vertex of the capsid and allows the virus attachment and entry into the host cell. As to quaternary structure, interacts with capsid protein VP0 and capsid protein VP1 to form heterotrimeric protomers. Five protomers subsequently associate to form pentamers which serve as building blocks for the capsid. Interacts with capsid protein VP4 in the mature capsid. Interacts with protein 2C; this interaction may be important for virion morphogenesis. Interacts with host CDHR3 (via N-terminus); this interaction occurs near each threefold vertex of the capsid and allows the virus attachment and entry into the host cell. Interacts (via C-terminus) with capsid protein VP1 (via C-terminus). Interacts with capsid protein VP3. In terms of assembly, homodimer. As to quaternary structure, homohexamer; forms a hexameric ring structure with 6-fold symmetry characteristic of AAA+ ATPases. Interacts (via N-terminus) with host RTN3 (via reticulon domain); this interaction is important for viral replication. Interacts with capsid protein VP3; this interaction may be important for virion morphogenesis. Interacts with protein 3CD. In terms of assembly, homodimer. Interacts with host GBF1. Interacts (via GOLD domain) with host ACBD3 (via GOLD domain); this interaction allows the formation of a viral protein 3A/ACBD3 heterotetramer with a 2:2 stoichiometry, which will stimulate the recruitment of host PI4KB in order to synthesize PI4P at the viral RNA replication sites. As to quaternary structure, interacts with RNA-directed RNA polymerase. Interacts with protein 3AB and with RNA-directed RNA polymerase. In terms of assembly, interacts with Viral protein genome-linked and with protein 3CD. The cofactor is Mg(2+). Post-translationally, specific enzymatic cleavages in vivo by the viral proteases yield processing intermediates and the mature proteins. Myristoylation is required for the formation of pentamers during virus assembly. Further assembly of 12 pentamers and a molecule of genomic RNA generates the provirion. In terms of processing, during virion maturation, immature virions are rendered infectious following cleavage of VP0 into VP4 and VP2. This maturation seems to be an autocatalytic event triggered by the presence of RNA in the capsid and it is followed by a conformational change infectious virion. Post-translationally, myristoylation is required during RNA encapsidation and formation of the mature virus particle. VPg is uridylylated by the polymerase into VPg-pUpU. This acts as a nucleotide-peptide primer for the genomic RNA replication.

It is found in the virion. The protein resides in the host cytoplasm. It localises to the host cytoplasmic vesicle membrane. The protein localises to the host nucleus. The catalysed reaction is a ribonucleoside 5'-triphosphate + H2O = a ribonucleoside 5'-diphosphate + phosphate + H(+). The enzyme catalyses Selective cleavage of Gln-|-Gly bond in the poliovirus polyprotein. In other picornavirus reactions Glu may be substituted for Gln, and Ser or Thr for Gly.. It carries out the reaction Selective cleavage of Tyr-|-Gly bond in the picornavirus polyprotein.. It catalyses the reaction RNA(n) + a ribonucleoside 5'-triphosphate = RNA(n+1) + diphosphate. Replication or transcription is subject to high level of random mutations by the nucleotide analog ribavirin. In terms of biological role, forms an icosahedral capsid of pseudo T=3 symmetry with capsid proteins VP2 and VP3. The capsid is 300 Angstroms in diameter, composed of 60 copies of each capsid protein and enclosing the viral positive strand RNA genome. Capsid protein VP1 mainly forms the vertices of the capsid. The VP1 C-termini form 60 dominant spike-like protrusions on the surface of the virion. Capsid protein VP1 interacts with host cell receptor CDHR3 to provide virion attachment to target host cells. This attachment induces virion internalization. Tyrosine kinases are probably involved in the entry process. After binding to its receptor, the capsid undergoes conformational changes. Capsid protein VP1 N-terminus (that contains an amphipathic alpha-helix) and capsid protein VP4 are externalized. Together, they shape a pore in the host membrane through which viral genome is translocated to host cell cytoplasm. Functionally, forms an icosahedral capsid of pseudo T=3 symmetry with capsid proteins VP2 and VP3. The capsid is 300 Angstroms in diameter, composed of 60 copies of each capsid protein and enclosing the viral positive strand RNA genome. Lies on the inner surface of the capsid shell. After binding to the host receptor, the capsid undergoes conformational changes. Capsid protein VP4 is released, Capsid protein VP1 N-terminus is externalized, and together, they shape a pore in the host membrane through which the viral genome is translocated into the host cell cytoplasm. Its function is as follows. Component of immature procapsids, which is cleaved into capsid proteins VP4 and VP2 after maturation. Allows the capsid to remain inactive before the maturation step. In terms of biological role, cysteine protease that cleaves viral polyprotein and specific host proteins. It is responsible for the autocatalytic cleavage between the P1 and P2 regions, which is the first cleavage occurring in the polyprotein. Also cleaves the host translation initiation factor EIF4G1, in order to shut down the capped cellular mRNA translation. Inhibits the host nucleus-cytoplasm protein and RNA trafficking by cleaving host members of the nuclear pores. Counteracts stress granule formation probably by antagonizing its assembly or promoting its dissassembly. Functionally, plays an essential role in the virus replication cycle by acting as a viroporin. Creates a pore in the host endoplasmic reticulum and as a consequence releases Ca2+ in the cytoplasm of infected cell. In turn, high levels of cytoplasmic calcium may trigger membrane trafficking and transport of viral ER-associated proteins to viroplasms, sites of viral genome replication. Induces and associates with structural rearrangements of intracellular membranes. Displays RNA-binding, nucleotide binding and NTPase activities. May play a role in virion morphogenesis and viral RNA encapsidation by interacting with the capsid protein VP3. Its function is as follows. Localizes the viral replication complex to the surface of membranous vesicles. Together with protein 3CD binds the Cis-Active RNA Element (CRE) which is involved in RNA synthesis initiation. Acts as a cofactor to stimulate the activity of 3D polymerase, maybe through a nucleid acid chaperone activity. In terms of biological role, localizes the viral replication complex to the surface of membranous vesicles. It inhibits host cell endoplasmic reticulum-to-Golgi apparatus transport and causes the disassembly of the Golgi complex, possibly through GBF1 interaction. This would result in depletion of MHC, trail receptors and IFN receptors at the host cell surface. Plays an essential role in viral RNA replication by recruiting ACBD3 and PI4KB at the viral replication sites, thereby allowing the formation of the rearranged membranous structures where viral replication takes place. Functionally, acts as a primer for viral RNA replication and remains covalently bound to viral genomic RNA. VPg is uridylylated prior to priming replication into VPg-pUpU. The oriI viral genomic sequence may act as a template for this. The VPg-pUpU is then used as primer on the genomic RNA poly(A) by the RNA-dependent RNA polymerase to replicate the viral genome. During genome replication, the VPg-RNA linkage is removed by the host TDP2, thereby accelerating replication. During the late stage of the replication cycle, host TDP2 is excluded from sites of viral RNA synthesis and encapsidation, allowing for the generation of progeny virions. Involved in the viral replication complex and viral polypeptide maturation. It exhibits protease activity with a specificity and catalytic efficiency that is different from protease 3C. Protein 3CD lacks polymerase activity. Protein 3CD binds to the 5'UTR of the viral genome. Its function is as follows. Major viral protease that mediates proteolytic processing of the polyprotein. Cleaves host EIF5B, contributing to host translation shutoff. Also cleaves host PABPC1, contributing to host translation shutoff. In terms of biological role, replicates the viral genomic RNA on the surface of intracellular membranes. May form linear arrays of subunits that propagate along a strong head-to-tail interaction called interface-I. Covalently attaches UMP to a tyrosine of VPg, which is used to prime RNA synthesis. The positive stranded RNA genome is first replicated at virus induced membranous vesicles, creating a dsRNA genomic replication form. This dsRNA is then used as template to synthesize positive stranded RNA genomes. ss(+)RNA genomes are either translated, replicated or encapsidated. The sequence is that of Genome polyprotein from Homo sapiens (Human).